The chain runs to 124 residues: Fluoride-specific ion channel FluC (124 aa).

4 helical membrane-spanning segments follow: residues 4–24, 35–55, 60–80, and 100–120; these read VLYI…ISIL, FGTL…YALA, IGPE…TTFS, and LNVL…QQLI. Na(+) is bound by residues Gly-74 and Thr-77.

Belongs to the fluoride channel Fluc/FEX (TC 1.A.43) family.

Its subcellular location is the cell inner membrane. It carries out the reaction fluoride(in) = fluoride(out). Its activity is regulated as follows. Na(+) is not transported, but it plays an essential structural role and its presence is essential for fluoride channel function. Fluoride-specific ion channel. Important for reducing fluoride concentration in the cell, thus reducing its toxicity. The polypeptide is Fluoride-specific ion channel FluC (Shewanella amazonensis (strain ATCC BAA-1098 / SB2B)).